A 182-amino-acid chain; its full sequence is Adenine phosphoribosyltransferase (182 aa).

It belongs to the purine/pyrimidine phosphoribosyltransferase family. As to quaternary structure, homodimer.

It localises to the cytoplasm. The catalysed reaction is AMP + diphosphate = 5-phospho-alpha-D-ribose 1-diphosphate + adenine. It participates in purine metabolism; AMP biosynthesis via salvage pathway; AMP from adenine: step 1/1. Its function is as follows. Catalyzes a salvage reaction resulting in the formation of AMP, that is energically less costly than de novo synthesis. This Shewanella frigidimarina (strain NCIMB 400) protein is Adenine phosphoribosyltransferase.